Here is a 560-residue protein sequence, read N- to C-terminus: Mitogen-activated protein kinase kinase kinase 3 (560 aa).

A disordered region spans residues 70-91 (KRQSSSSSDNTSDKEEVETEET). In terms of domain architecture, Protein kinase spans 303 to 557 (WLKGQLLGRG…AAELLHHPFV (255 aa)). ATP contacts are provided by residues 309–317 (LGRGSYASV) and K331. D426 functions as the Proton acceptor in the catalytic mechanism.

The protein belongs to the protein kinase superfamily. STE Ser/Thr protein kinase family. MAP kinase kinase kinase subfamily. As to expression, expressed at low levels in roots, stems, siliques, leaves, seedlings and flower buds.

It carries out the reaction L-seryl-[protein] + ATP = O-phospho-L-seryl-[protein] + ADP + H(+). The enzyme catalyses L-threonyl-[protein] + ATP = O-phospho-L-threonyl-[protein] + ADP + H(+). The chain is Mitogen-activated protein kinase kinase kinase 3 from Arabidopsis thaliana (Mouse-ear cress).